Reading from the N-terminus, the 355-residue chain is Probable cinnamyl alcohol dehydrogenase (355 aa).

Cys47 lines the Zn(2+) pocket. Residue Ser49 coordinates NADP(+). Zn(2+)-binding residues include His69, Glu70, Cys100, Cys103, Cys106, Cys114, and Cys162. Residues Thr166, 187 to 192 (GLGGVG), 210 to 215 (SSSDKK), Thr250, Gly274, and 297 to 299 (SFI) contribute to the NADP(+) site.

It belongs to the zinc-containing alcohol dehydrogenase family. Homodimer. Zn(2+) is required as a cofactor.

It catalyses the reaction (E)-cinnamyl alcohol + NADP(+) = (E)-cinnamaldehyde + NADPH + H(+). The catalysed reaction is (E)-coniferol + NADP(+) = (E)-coniferaldehyde + NADPH + H(+). It carries out the reaction (E)-sinapyl alcohol + NADP(+) = (E)-sinapaldehyde + NADPH + H(+). The enzyme catalyses (E)-4-coumaroyl alcohol + NADP(+) = (E)-4-coumaraldehyde + NADPH + H(+). It catalyses the reaction (E)-caffeyl alcohol + NADP(+) = (E)-caffeyl aldehyde + NADPH + H(+). Its pathway is aromatic compound metabolism; phenylpropanoid biosynthesis. In terms of biological role, involved in lignin biosynthesis. Catalyzes the final step specific for the production of lignin monomers. Catalyzes the NADPH-dependent reduction of coniferaldehyde, 5-hydroxyconiferaldehyde, sinapaldehyde, 4-coumaraldehyde and caffeyl aldehyde to their respective alcohols. This chain is Probable cinnamyl alcohol dehydrogenase (CAD1), found in Eucalyptus botryoides (Southern mahogany).